A 376-amino-acid chain; its full sequence is Carbamoyl phosphate synthase small chain (376 aa).

The interval 1-181 is nucleophile; it reads MSKAVLVLED…VEPDGPPGVS (181 aa). The CPSase stretch occupies residues 1 to 183; the sequence is MSKAVLVLED…PDGPPGVSRF (183 aa). L-glutamine is bound by residues Ser46, Gly232, Gly234, Phe261, Gln264, Asn302, Gly304, and Phe305. Positions 184 to 376 constitute a Glutamine amidotransferase type-1 domain; sequence TVAALDLGIK…FVELMAGEGR (193 aa). Catalysis depends on residues His350 and Glu352.

It belongs to the CarA family. As to quaternary structure, composed of two chains; the small (or glutamine) chain promotes the hydrolysis of glutamine to ammonia, which is used by the large (or ammonia) chain to synthesize carbamoyl phosphate. Tetramer of heterodimers (alpha,beta)4.

It carries out the reaction hydrogencarbonate + L-glutamine + 2 ATP + H2O = carbamoyl phosphate + L-glutamate + 2 ADP + phosphate + 2 H(+). The enzyme catalyses L-glutamine + H2O = L-glutamate + NH4(+). Its pathway is amino-acid biosynthesis; L-arginine biosynthesis; carbamoyl phosphate from bicarbonate: step 1/1. It functions in the pathway pyrimidine metabolism; UMP biosynthesis via de novo pathway; (S)-dihydroorotate from bicarbonate: step 1/3. Small subunit of the glutamine-dependent carbamoyl phosphate synthetase (CPSase). CPSase catalyzes the formation of carbamoyl phosphate from the ammonia moiety of glutamine, carbonate, and phosphate donated by ATP, constituting the first step of 2 biosynthetic pathways, one leading to arginine and/or urea and the other to pyrimidine nucleotides. The small subunit (glutamine amidotransferase) binds and cleaves glutamine to supply the large subunit with the substrate ammonia. The sequence is that of Carbamoyl phosphate synthase small chain from Mycobacterium tuberculosis (strain CDC 1551 / Oshkosh).